Reading from the N-terminus, the 256-residue chain is Pimeloyl-[acyl-carrier protein] methyl ester esterase (256 aa).

Residues 15 to 242 (HLVLLHGWGL…AAHAPFISHP (228 aa)) form the AB hydrolase-1 domain. Substrate contacts are provided by residues Trp-22, 82-83 (SL), and 143-147 (FLALQ). The Nucleophile role is filled by Ser-82. Active-site residues include Asp-207 and His-235. His-235 contributes to the substrate binding site.

The protein belongs to the AB hydrolase superfamily. Carboxylesterase BioH family. As to quaternary structure, monomer.

It is found in the cytoplasm. The enzyme catalyses 6-carboxyhexanoyl-[ACP] methyl ester + H2O = 6-carboxyhexanoyl-[ACP] + methanol + H(+). Its pathway is cofactor biosynthesis; biotin biosynthesis. Its function is as follows. The physiological role of BioH is to remove the methyl group introduced by BioC when the pimeloyl moiety is complete. It allows to synthesize pimeloyl-ACP via the fatty acid synthetic pathway through the hydrolysis of the ester bonds of pimeloyl-ACP esters. In Escherichia coli O6:K15:H31 (strain 536 / UPEC), this protein is Pimeloyl-[acyl-carrier protein] methyl ester esterase.